We begin with the raw amino-acid sequence, 834 residues long: Periplasmic nitrate reductase (834 aa).

Positions 1–31 (MTGELTRREMLKAHAAGIAAATAGIALPAAA) form a signal peptide, tat-type signal. The 4Fe-4S Mo/W bis-MGD-type domain maps to 43 to 99 (ITWSKAPCRFCGTGCGVMVGVKEGQVVATHGDMQAEVNRGLNCIKGYFLSKIMYGTD). [4Fe-4S] cluster-binding residues include cysteine 50, cysteine 53, cysteine 57, and cysteine 85. Mo-bis(molybdopterin guanine dinucleotide) contacts are provided by residues lysine 87, glutamine 154, asparagine 179, cysteine 183, 216–223 (WGSNMAEM), 247–251 (STFTH), 266–268 (GTD), methionine 377, glutamine 381, asparagine 487, 513–514 (SD), lysine 536, aspartate 563, and 723–732 (TGRVLEHWHS). Tryptophan 799 contacts substrate. Positions 807 and 824 each coordinate Mo-bis(molybdopterin guanine dinucleotide).

This sequence belongs to the prokaryotic molybdopterin-containing oxidoreductase family. NasA/NapA/NarB subfamily. In terms of assembly, component of the periplasmic nitrate reductase NapAB complex composed of NapA and NapB. Requires [4Fe-4S] cluster as cofactor. It depends on Mo-bis(molybdopterin guanine dinucleotide) as a cofactor. In terms of processing, predicted to be exported by the Tat system. The position of the signal peptide cleavage has not been experimentally proven.

The protein localises to the periplasm. The enzyme catalyses 2 Fe(II)-[cytochrome] + nitrate + 2 H(+) = 2 Fe(III)-[cytochrome] + nitrite + H2O. Functionally, catalytic subunit of the periplasmic nitrate reductase complex NapAB. Receives electrons from NapB and catalyzes the reduction of nitrate to nitrite. This Rhizobium meliloti (strain 1021) (Ensifer meliloti) protein is Periplasmic nitrate reductase.